A 264-amino-acid chain; its full sequence is 3-methyl-2-oxobutanoate hydroxymethyltransferase (264 aa).

Residues Asp44 and Asp83 each contribute to the Mg(2+) site. Residues 44–45 (DS), Asp83, and Lys112 contribute to the 3-methyl-2-oxobutanoate site. Residue Glu114 coordinates Mg(2+). The active-site Proton acceptor is Glu181.

Belongs to the PanB family. In terms of assembly, homodecamer; pentamer of dimers. Mg(2+) serves as cofactor.

Its subcellular location is the cytoplasm. The catalysed reaction is 3-methyl-2-oxobutanoate + (6R)-5,10-methylene-5,6,7,8-tetrahydrofolate + H2O = 2-dehydropantoate + (6S)-5,6,7,8-tetrahydrofolate. The protein operates within cofactor biosynthesis; coenzyme A biosynthesis. Its function is as follows. Catalyzes the reversible reaction in which hydroxymethyl group from 5,10-methylenetetrahydrofolate is transferred onto alpha-ketoisovalerate to form ketopantoate. In Pyrobaculum arsenaticum (strain DSM 13514 / JCM 11321 / PZ6), this protein is 3-methyl-2-oxobutanoate hydroxymethyltransferase.